We begin with the raw amino-acid sequence, 182 residues long: Dirigent protein 5 (182 aa).

Positions 1 to 23 (MVGQMKSFLFLFVFLVLTKTVIS) are cleaved as a signal peptide. C35 and C181 are disulfide-bonded. N54 and N118 each carry an N-linked (GlcNAc...) asparagine glycan.

The protein belongs to the plant dirigent protein family. As to quaternary structure, homodimer. As to expression, confined to shoot meristem, vascular region of cotyledons and siliques abscission zone.

The protein resides in the secreted. Its subcellular location is the extracellular space. The protein localises to the apoplast. Dirigent proteins impart stereoselectivity on the phenoxy radical-coupling reaction, yielding optically active lignans from two molecules of coniferyl alcohol in the biosynthesis of lignans, flavonolignans, and alkaloids and thus plays a central role in plant secondary metabolism. Enantiocomplementary dirigent protein that mediates the laccase-catalyzed enantioselective oxidative phenol coupling of (E)-coniferyl alcohol to (-)-pinoresinol. This is Dirigent protein 5 (DIR5) from Arabidopsis thaliana (Mouse-ear cress).